Here is a 145-residue protein sequence, read N- to C-terminus: 3-dehydroquinate dehydratase (145 aa).

Y24 functions as the Proton acceptor in the catalytic mechanism. The substrate site is built by N75, H81, and D88. The active-site Proton donor is the H102. Residues 103-104 (LS) and R113 each bind substrate.

The protein belongs to the type-II 3-dehydroquinase family. In terms of assembly, homododecamer.

It carries out the reaction 3-dehydroquinate = 3-dehydroshikimate + H2O. Its pathway is metabolic intermediate biosynthesis; chorismate biosynthesis; chorismate from D-erythrose 4-phosphate and phosphoenolpyruvate: step 3/7. Functionally, catalyzes a trans-dehydration via an enolate intermediate. The sequence is that of 3-dehydroquinate dehydratase from Chelativorans sp. (strain BNC1).